A 107-amino-acid polypeptide reads, in one-letter code: YcgL domain-containing protein Psyc_0800 (107 aa).

Positions 1–95 (MHCDIYKFLK…QDVMRRQAEL (95 aa)) constitute a YcgL domain.

This is YcgL domain-containing protein Psyc_0800 from Psychrobacter arcticus (strain DSM 17307 / VKM B-2377 / 273-4).